The following is a 264-amino-acid chain: 3-methyl-2-oxobutanoate hydroxymethyltransferase (264 aa).

Mg(2+) contacts are provided by Asp45 and Asp84. 3-methyl-2-oxobutanoate-binding positions include 45 to 46 (DS), Asp84, and Lys112. Glu114 provides a ligand contact to Mg(2+). Glu181 (proton acceptor) is an active-site residue.

Belongs to the PanB family. Homodecamer; pentamer of dimers. Mg(2+) serves as cofactor.

The protein localises to the cytoplasm. The catalysed reaction is 3-methyl-2-oxobutanoate + (6R)-5,10-methylene-5,6,7,8-tetrahydrofolate + H2O = 2-dehydropantoate + (6S)-5,6,7,8-tetrahydrofolate. The protein operates within cofactor biosynthesis; (R)-pantothenate biosynthesis; (R)-pantoate from 3-methyl-2-oxobutanoate: step 1/2. Its function is as follows. Catalyzes the reversible reaction in which hydroxymethyl group from 5,10-methylenetetrahydrofolate is transferred onto alpha-ketoisovalerate to form ketopantoate. The protein is 3-methyl-2-oxobutanoate hydroxymethyltransferase of Shewanella sp. (strain MR-4).